The primary structure comprises 481 residues: Glutamate-1-semialdehyde 2,1-aminomutase, chloroplastic (481 aa).

A disordered region spans residues 18–40; that stretch reads NQTPKWGFSPSHRRCNPSSSSSA. Residue Lys321 is modified to N6-(pyridoxal phosphate)lysine.

Belongs to the class-III pyridoxal-phosphate-dependent aminotransferase family. HemL subfamily. In terms of assembly, homodimer. Pyridoxal 5'-phosphate is required as a cofactor.

The protein localises to the plastid. Its subcellular location is the chloroplast. It carries out the reaction (S)-4-amino-5-oxopentanoate = 5-aminolevulinate. It participates in porphyrin-containing compound metabolism; protoporphyrin-IX biosynthesis; 5-aminolevulinate from L-glutamyl-tRNA(Glu): step 2/2. It functions in the pathway porphyrin-containing compound metabolism; chlorophyll biosynthesis. This Solanum lycopersicum (Tomato) protein is Glutamate-1-semialdehyde 2,1-aminomutase, chloroplastic.